Reading from the N-terminus, the 310-residue chain is Membrane protein insertase YidC 2 (310 aa).

The signal sequence occupies residues 1–23; the sequence is MKKTLKRILFSSLSLSMLLLLTG. A lipid anchor (N-palmitoyl cysteine) is attached at Cys-24. The S-diacylglycerol cysteine moiety is linked to residue Cys-24. The next 5 membrane-spanning stretches (helical) occupy residues 33 to 53, 58 to 78, 135 to 155, 180 to 200, and 219 to 239; these read PYGV…TYFA, LGFG…ILPL, FGGI…AIFF, LTVI…QGVP, and VFMS…GGIF. The tract at residues 266–310 is disordered; sequence NPPKAYKANNARKDVTNSTKATESNQAIITSKKTNRNAGKQKRRG. A compositionally biased stretch (polar residues) spans 281 to 297; that stretch reads TNSTKATESNQAIITSK. Residues 298 to 310 are compositionally biased toward basic residues; it reads KTNRNAGKQKRRG.

The protein belongs to the OXA1/ALB3/YidC family. Type 2 subfamily.

The protein localises to the cell membrane. Functionally, required for the insertion and/or proper folding and/or complex formation of integral membrane proteins into the membrane. Involved in integration of membrane proteins that insert both dependently and independently of the Sec translocase complex, as well as at least some lipoproteins. The chain is Membrane protein insertase YidC 2 from Streptococcus agalactiae serotype V (strain ATCC BAA-611 / 2603 V/R).